The primary structure comprises 95 residues: Heteroscorpine-1 (95 aa).

The first 19 residues, 1–19 (MNSKLTALIFLGLVAIASC), serve as a signal peptide directing secretion. In terms of domain architecture, BetaSPN-type CS-alpha/beta spans 55 to 95 (EFQCVANIDTMGNCETHCQKTSGEKGFCHGTKCKCGKPLSY). Intrachain disulfides connect Cys58/Cys82, Cys68/Cys87, and Cys72/Cys89.

This sequence belongs to the long chain scorpion toxin family. Class 3 subfamily. Contains 3 disulfide bonds. Expressed by the venom gland.

The protein localises to the secreted. Functionally, has antibacterial activity against B.subtilis, K.pneumoniae and P.aeruginosa. The protein is Heteroscorpine-1 of Heterometrus laoticus (Thai giant scorpion).